The primary structure comprises 235 residues: MICOS complex subunit MIC25 (235 aa).

A lipid anchor (N-myristoyl glycine) is attached at G2. 2 positions are modified to phosphoserine: S13 and S31. Disordered stretches follow at residues 31-90 (SENV…VKRY) and 106-132 (KRER…HEEQ). Positions 129-176 (HEEQKSVRLARELESREAELRRRDTFYKEQLERIERKNAEMYKLSSEQ) form a coiled coil. The CHCH domain occupies 194-235 (EPVCSGLQAQILHCYRDRPHEVLLCSDLVKAYQRCVSAAHKG). 2 consecutive short sequence motifs (cx9C motif) follow at residues 197-207 (CSGLQAQILHC) and 218-228 (CSDLVKAYQRC). Cystine bridges form between C197-C228 and C207-C218.

This sequence belongs to the MICOS complex subunit Mic19 family. Metazoan Mic25 subfamily. In terms of assembly, component of the mitochondrial contact site and cristae organizing system (MICOS) complex, composed of at least MICOS10/MIC10, CHCHD3/MIC19, CHCHD6/MIC25, APOOL/MIC27, IMMT/MIC60, APOO/MIC23/MIC26 and MICOS13/MIC13. This complex was also known under the names MINOS or MitOS complex. The MICOS complex associates with mitochondrial outer membrane proteins SAMM50, MTX1 and MTX2 (together described as components of the mitochondrial outer membrane sorting assembly machinery (SAM) complex) and DNAJC11, mitochondrial inner membrane protein TMEM11 and with HSPA9. The MICOS and SAM complexes together with DNAJC11 are part of a large protein complex spanning both membranes termed the mitochondrial intermembrane space bridging (MIB) complex. Interacts with DISC1. Interacts with DISC1. Interacts with IMMT/MIC60. (Microbial infection) Interacts with human cytomegalovirus protein UL37 isoform vMIA; this interaction rewires mitochondria by engaging the conserved MICOS complex.

It localises to the mitochondrion inner membrane. The protein resides in the mitochondrion. In terms of biological role, component of the MICOS complex, a large protein complex of the mitochondrial inner membrane that plays crucial roles in the maintenance of crista junctions, inner membrane architecture, and formation of contact sites to the outer membrane. This is MICOS complex subunit MIC25 (CHCHD6) from Homo sapiens (Human).